Reading from the N-terminus, the 126-residue chain is Aspartate 1-decarboxylase (126 aa).

Residue serine 25 is the Schiff-base intermediate with substrate; via pyruvic acid of the active site. The residue at position 25 (serine 25) is a Pyruvic acid (Ser). Residue threonine 57 participates in substrate binding. Tyrosine 58 serves as the catalytic Proton donor. Residue 73–75 (GGA) participates in substrate binding.

This sequence belongs to the PanD family. As to quaternary structure, heterooctamer of four alpha and four beta subunits. Pyruvate serves as cofactor. In terms of processing, is synthesized initially as an inactive proenzyme, which is activated by self-cleavage at a specific serine bond to produce a beta-subunit with a hydroxyl group at its C-terminus and an alpha-subunit with a pyruvoyl group at its N-terminus.

Its subcellular location is the cytoplasm. It catalyses the reaction L-aspartate + H(+) = beta-alanine + CO2. Its pathway is cofactor biosynthesis; (R)-pantothenate biosynthesis; beta-alanine from L-aspartate: step 1/1. Functionally, catalyzes the pyruvoyl-dependent decarboxylation of aspartate to produce beta-alanine. This chain is Aspartate 1-decarboxylase, found in Xanthomonas axonopodis pv. citri (strain 306).